Reading from the N-terminus, the 303-residue chain is MKKIKCALIGPGNIGTDLLAKLKRSSVLEPVWMVGIDPESEGLNRARELGIKTTAEGVDGLLPHVLADGVQIAFDATSAYVHAENARKLNALGVMMIDLTPAAIGPYCVPPVNLKEHLGKREMNVNMVTCGGQATIPMVAAVSRVQPVAYGEIVATVSSRSVGPGTRKNIDEFTRTTAGAVEKVGGARKGKAIIIINPAEPPLMMRDTIHCLTETEPDQQRIAESIHAMIEEVQKYVPGYRLVNGPVFDGKRVTVFMEVAGLGDYLPTYAGNLDIMTAAAARTAEMFAEEMIAGNLTLEPVVA.

The Acyl-thioester intermediate role is filled by Cys130. Residues 161-169 and Asn272 each bind NAD(+); that span reads SVGPGTRKN.

The protein belongs to the acetaldehyde dehydrogenase family.

It carries out the reaction acetaldehyde + NAD(+) + CoA = acetyl-CoA + NADH + H(+). This is Acetaldehyde dehydrogenase 1 from Cupriavidus metallidurans (strain ATCC 43123 / DSM 2839 / NBRC 102507 / CH34) (Ralstonia metallidurans).